We begin with the raw amino-acid sequence, 439 residues long: Glutamate--tRNA ligase 1 (439 aa).

Residues 6-16 (PSPTGDMHIGN) carry the 'HIGH' region motif. The 'KMSKS' region signature appears at 232–236 (KMSKR). ATP is bound at residue Lys235.

The protein belongs to the class-I aminoacyl-tRNA synthetase family. Glutamate--tRNA ligase type 1 subfamily. Monomer.

Its subcellular location is the cytoplasm. It catalyses the reaction tRNA(Glu) + L-glutamate + ATP = L-glutamyl-tRNA(Glu) + AMP + diphosphate. In terms of biological role, catalyzes the attachment of glutamate to tRNA(Glu) in a two-step reaction: glutamate is first activated by ATP to form Glu-AMP and then transferred to the acceptor end of tRNA(Glu). This Helicobacter acinonychis (strain Sheeba) protein is Glutamate--tRNA ligase 1.